We begin with the raw amino-acid sequence, 176 residues long: NAD(P)H-quinone oxidoreductase subunit 6, chloroplastic (176 aa).

Transmembrane regions (helical) follow at residues Phe10 to Thr30, Pro32 to Leu52, Ala61 to Met81, Leu92 to Ile112, and Phe152 to Ala172.

This sequence belongs to the complex I subunit 6 family. In terms of assembly, NDH is composed of at least 16 different subunits, 5 of which are encoded in the nucleus.

The protein resides in the plastid. It is found in the chloroplast thylakoid membrane. It catalyses the reaction a plastoquinone + NADH + (n+1) H(+)(in) = a plastoquinol + NAD(+) + n H(+)(out). It carries out the reaction a plastoquinone + NADPH + (n+1) H(+)(in) = a plastoquinol + NADP(+) + n H(+)(out). Its function is as follows. NDH shuttles electrons from NAD(P)H:plastoquinone, via FMN and iron-sulfur (Fe-S) centers, to quinones in the photosynthetic chain and possibly in a chloroplast respiratory chain. The immediate electron acceptor for the enzyme in this species is believed to be plastoquinone. Couples the redox reaction to proton translocation, and thus conserves the redox energy in a proton gradient. The protein is NAD(P)H-quinone oxidoreductase subunit 6, chloroplastic (ndhG) of Pelargonium hortorum (Common geranium).